Consider the following 310-residue polypeptide: Haloalkane dehalogenase (310 aa).

One can recognise an AB hydrolase-1 domain in the interval 30 to 140; it reads PVVLFLHGNP…PMPTWQDFHH (111 aa). The Nucleophile role is filled by D103. The active-site Proton donor is the E127. The Proton acceptor role is filled by H280.

The protein belongs to the haloalkane dehalogenase family. Type 2 subfamily. In terms of assembly, monomer.

The catalysed reaction is 1-haloalkane + H2O = a halide anion + a primary alcohol + H(+). Its function is as follows. Catalyzes hydrolytic cleavage of carbon-halogen bonds in halogenated aliphatic compounds, leading to the formation of the corresponding primary alcohols, halide ions and protons. The sequence is that of Haloalkane dehalogenase from Bradyrhizobium diazoefficiens (strain JCM 10833 / BCRC 13528 / IAM 13628 / NBRC 14792 / USDA 110).